We begin with the raw amino-acid sequence, 508 residues long: Bifunctional purine biosynthesis protein PurH (508 aa).

Residues 1 to 144 (MTRALLSVSD…KNFASVLPIV (144 aa)) enclose the MGS-like domain.

It belongs to the PurH family.

It catalyses the reaction (6R)-10-formyltetrahydrofolate + 5-amino-1-(5-phospho-beta-D-ribosyl)imidazole-4-carboxamide = 5-formamido-1-(5-phospho-D-ribosyl)imidazole-4-carboxamide + (6S)-5,6,7,8-tetrahydrofolate. It carries out the reaction IMP + H2O = 5-formamido-1-(5-phospho-D-ribosyl)imidazole-4-carboxamide. Its pathway is purine metabolism; IMP biosynthesis via de novo pathway; 5-formamido-1-(5-phospho-D-ribosyl)imidazole-4-carboxamide from 5-amino-1-(5-phospho-D-ribosyl)imidazole-4-carboxamide (10-formyl THF route): step 1/1. It functions in the pathway purine metabolism; IMP biosynthesis via de novo pathway; IMP from 5-formamido-1-(5-phospho-D-ribosyl)imidazole-4-carboxamide: step 1/1. The chain is Bifunctional purine biosynthesis protein PurH from Leuconostoc mesenteroides subsp. mesenteroides (strain ATCC 8293 / DSM 20343 / BCRC 11652 / CCM 1803 / JCM 6124 / NCDO 523 / NBRC 100496 / NCIMB 8023 / NCTC 12954 / NRRL B-1118 / 37Y).